The following is a 423-amino-acid chain: MLWRNEITEFMDQLSKYSQEILKTFKQLRPSEYKQYNEFLTQVTPLLQKTPEKIPEEVDHIFDYLDNVEKICELLVHASSIIISSKIREQVKHGMSFSYKTDLDSLAGILSQKQYVLIHLSKNIAAHYFNTCLNQGKSRLDLKAASVFYNSRPRTASSAELYRKMLYAYGSLQEINYYTEKARNKTLDVEESDSMATIERTARHNLSLMHPLEAMGLTFGATNTDADPEDLKDKTVINLTLPQATESVTYHLNSLMQLKKVSTTSGLNTNILKAFDNIISTPVKKNKMASKLAPGMDVVFTSDNGKTFFTKNVLSKNMLAGPKERVFAYNNLISNLNNSCFIQNHNDFLRQQDSWPFYDAHNFTNKFLMQPIFSGQTRPRLQGAMEAAHVETHLTAFLQSIQPSRPQDPSILASPKLSALILN.

The protein belongs to the asfivirus E423R family.

It localises to the virion. This is an uncharacterized protein from African swine fever virus (isolate Pig/Kenya/KEN-50/1950) (ASFV).